The primary structure comprises 126 residues: Fluoride-specific ion channel FluC (126 aa).

4 consecutive transmembrane segments (helical) span residues 6-26 (VLLV…VALA), 32-52 (TGFP…IGFI), 68-90 (LLLT…ETGG), and 102-122 (LYVA…TLLA). Na(+) is bound by residues Gly-76 and Thr-79.

Belongs to the fluoride channel Fluc/FEX (TC 1.A.43) family.

The protein localises to the cell inner membrane. The enzyme catalyses fluoride(in) = fluoride(out). Na(+) is not transported, but it plays an essential structural role and its presence is essential for fluoride channel function. Fluoride-specific ion channel. Important for reducing fluoride concentration in the cell, thus reducing its toxicity. The polypeptide is Fluoride-specific ion channel FluC (Chlorobaculum tepidum (strain ATCC 49652 / DSM 12025 / NBRC 103806 / TLS) (Chlorobium tepidum)).